The primary structure comprises 55 residues: uncharacterized protein (55 aa).

A helical membrane pass occupies residues 7-24 (VALVGAVLATLTACTGHI).

It localises to the membrane. This is an uncharacterized protein from Escherichia coli O157:H7.